Reading from the N-terminus, the 569-residue chain is MLO-like protein 10 (569 aa).

Residues 1–41 (MATRCFWCWTTLLFCSQLLTGFARASSAGGAKEKGLSQTPT) lie on the Extracellular side of the membrane. Residues 42–62 (WAVALVCTFFILVSVLLEKAL) traverse the membrane as a helical segment. The Cytoplasmic segment spans residues 63-85 (HRVATWLWEKHKNSLLEALEKIK). Residues 86–106 (AELMILGFISLLLTFGEQYIL) form a helical membrane-spanning segment. Residues 107–163 (KICIPEKAAASMLPCPAPSTHDQDKTHRRRLAAATTSSRCDEGHEPLIPATGLHQLH) lie on the Extracellular side of the membrane. A helical transmembrane segment spans residues 164-184 (ILLFFMAAFHILYSFITMMLG). The Cytoplasmic portion of the chain corresponds to 185–286 (RLKIRGWKKW…IKRSLEDDFK (102 aa)). Residues 287-307 (VVVGISPLLWASFVIFLLLNV) traverse the membrane as a helical segment. Position 308 (N308) is a topological domain, extracellular. The helical transmembrane segment at 309–329 (GWEALFWASILPVLIILAVST) threads the bilayer. Topologically, residues 330–372 (KLQAILTRMALGITERHAVVQGIPLVHGSDKYFWFNRPQLLLH) are cytoplasmic. A helical transmembrane segment spans residues 373-393 (LLHFALFQNAFQLTYFFWVWY). Residues 394-413 (SFGLKSCFHTDFKLVIVKLS) are Extracellular-facing. A helical membrane pass occupies residues 414 to 434 (LGVGALILCSYITLPLYALVT). Residues 435 to 569 (QMGSNMKKAV…VKNVPANDID (135 aa)) lie on the Cytoplasmic side of the membrane. The interval 447-468 (EQMAKALKKWHMTVKKKKGKAR) is calmodulin-binding.

Belongs to the MLO family.

Its subcellular location is the membrane. Its function is as follows. May be involved in modulation of pathogen defense and leaf cell death. Activity seems to be regulated by Ca(2+)-dependent calmodulin binding and seems not to require heterotrimeric G proteins. This Arabidopsis thaliana (Mouse-ear cress) protein is MLO-like protein 10 (MLO10).